A 697-amino-acid chain; its full sequence is Beta-galactosidase 17 (697 aa).

Residues 1-35 (MAMTSWPSTGRQRRHQLASMLLLVLVVVGIYVPVF) form the signal peptide. The Proton donor role is filled by Glu218. Glu301 acts as the Nucleophile in catalysis. Residues Asn333, Asn519, Asn573, Asn583, and Asn690 are each glycosylated (N-linked (GlcNAc...) asparagine).

The protein belongs to the glycosyl hydrolase 35 family. In terms of tissue distribution, ubiquitous, with higher expression levels in roots and siliques.

The protein localises to the secreted. It localises to the extracellular space. It is found in the apoplast. The enzyme catalyses Hydrolysis of terminal non-reducing beta-D-galactose residues in beta-D-galactosides.. This Arabidopsis thaliana (Mouse-ear cress) protein is Beta-galactosidase 17 (BGAL17).